The following is a 404-amino-acid chain: Probable tRNA sulfurtransferase (404 aa).

Positions 61–166 (QTLVTGLPKI…HDATYMMAQV (106 aa)) constitute a THUMP domain. ATP-binding positions include 184–185 (ML), 209–210 (HF), arginine 266, glycine 288, and glutamine 297.

Belongs to the ThiI family.

The protein localises to the cytoplasm. It carries out the reaction [ThiI sulfur-carrier protein]-S-sulfanyl-L-cysteine + a uridine in tRNA + 2 reduced [2Fe-2S]-[ferredoxin] + ATP + H(+) = [ThiI sulfur-carrier protein]-L-cysteine + a 4-thiouridine in tRNA + 2 oxidized [2Fe-2S]-[ferredoxin] + AMP + diphosphate. It catalyses the reaction [ThiS sulfur-carrier protein]-C-terminal Gly-Gly-AMP + S-sulfanyl-L-cysteinyl-[cysteine desulfurase] + AH2 = [ThiS sulfur-carrier protein]-C-terminal-Gly-aminoethanethioate + L-cysteinyl-[cysteine desulfurase] + A + AMP + 2 H(+). The protein operates within cofactor biosynthesis; thiamine diphosphate biosynthesis. Its function is as follows. Catalyzes the ATP-dependent transfer of a sulfur to tRNA to produce 4-thiouridine in position 8 of tRNAs, which functions as a near-UV photosensor. Also catalyzes the transfer of sulfur to the sulfur carrier protein ThiS, forming ThiS-thiocarboxylate. This is a step in the synthesis of thiazole, in the thiamine biosynthesis pathway. The sulfur is donated as persulfide by IscS. The sequence is that of Probable tRNA sulfurtransferase from Lysinibacillus sphaericus (strain C3-41).